We begin with the raw amino-acid sequence, 252 residues long: tRNA (guanine-N(1)-)-methyltransferase (252 aa).

Residues Gly113 and Val133–Leu138 each bind S-adenosyl-L-methionine.

The protein belongs to the RNA methyltransferase TrmD family. Homodimer.

The protein localises to the cytoplasm. It carries out the reaction guanosine(37) in tRNA + S-adenosyl-L-methionine = N(1)-methylguanosine(37) in tRNA + S-adenosyl-L-homocysteine + H(+). In terms of biological role, specifically methylates guanosine-37 in various tRNAs. The protein is tRNA (guanine-N(1)-)-methyltransferase of Francisella tularensis subsp. holarctica (strain FTNF002-00 / FTA).